Consider the following 432-residue polypeptide: Guanine nucleotide-binding protein subunit alpha (432 aa).

The tract at residues 1–97 (MGGCMSTPEA…SKGNKDRSNQ (97 aa)) is disordered. Residue Gly-2 is the site of N-myristoyl glycine attachment. Cys-4 carries the S-palmitoyl cysteine lipid modification. Over residues 21–52 (PSTSTSSRPPQASTSATATAAGAGTSAANGTA) the composition is skewed to low complexity. One can recognise a G-alpha domain in the interval 111–432 (KECKILLLGS…QNALRDSGIL (322 aa)). Residues 114 to 127 (KILLLGSGESGKST) are G1 motif. GTP contacts are provided by Glu-122, Ser-123, Gly-124, Lys-125, Ser-126, Thr-127, Asp-230, Leu-255, Thr-261, Gly-283, Asn-349, Lys-350, Asp-352, and Ala-404. Ser-126 provides a ligand contact to Mg(2+). The interval 253–261 (DVLRARTKT) is G2 motif. Thr-261 serves as a coordination point for Mg(2+). Residues 276–285 (IHMFDVGGQR) form a G3 motif region. The segment at 345–352 (ILFLNKID) is G4 motif. Residues 402 to 407 (TQATDT) are G5 motif.

Belongs to the G-alpha family. In terms of assembly, g proteins are composed of 3 units; alpha, beta and gamma. The alpha chain contains the guanine nucleotide binding site. Mg(2+) is required as a cofactor.

Its function is as follows. Guanine nucleotide-binding proteins (G proteins) are involved as modulators or transducers in various transmembrane signaling systems. Involved in the mating pathway. The chain is Guanine nucleotide-binding protein subunit alpha (GPA1) from Cryptococcus neoformans var. neoformans serotype D (strain B-3501A) (Filobasidiella neoformans).